The sequence spans 323 residues: Beta-ketoacyl-[acyl-carrier-protein] synthase III (323 aa).

Residues Cys-113 and His-250 contribute to the active site. The ACP-binding stretch occupies residues 251-255 (QANKR). Residue Asn-280 is part of the active site.

It belongs to the thiolase-like superfamily. FabH family. Homodimer.

The protein resides in the cytoplasm. The enzyme catalyses malonyl-[ACP] + acetyl-CoA + H(+) = 3-oxobutanoyl-[ACP] + CO2 + CoA. Its pathway is lipid metabolism; fatty acid biosynthesis. Its function is as follows. Catalyzes the condensation reaction of fatty acid synthesis by the addition to an acyl acceptor of two carbons from malonyl-ACP. Catalyzes the first condensation reaction which initiates fatty acid synthesis and may therefore play a role in governing the total rate of fatty acid production. Possesses both acetoacetyl-ACP synthase and acetyl transacylase activities. Its substrate specificity determines the biosynthesis of branched-chain and/or straight-chain of fatty acids. This is Beta-ketoacyl-[acyl-carrier-protein] synthase III from Brucella abortus biovar 1 (strain 9-941).